The following is a 105-amino-acid chain: Phosphoribosyl-AMP cyclohydrolase (105 aa).

Residue Asp72 participates in Mg(2+) binding. Residue Cys73 coordinates Zn(2+). The Mg(2+) site is built by Asp74 and Asp76. The Zn(2+) site is built by Cys89 and Cys96.

It belongs to the PRA-CH family. Homodimer. The cofactor is Mg(2+). Zn(2+) serves as cofactor.

It localises to the cytoplasm. It carries out the reaction 1-(5-phospho-beta-D-ribosyl)-5'-AMP + H2O = 1-(5-phospho-beta-D-ribosyl)-5-[(5-phospho-beta-D-ribosylamino)methylideneamino]imidazole-4-carboxamide. Its pathway is amino-acid biosynthesis; L-histidine biosynthesis; L-histidine from 5-phospho-alpha-D-ribose 1-diphosphate: step 3/9. Its function is as follows. Catalyzes the hydrolysis of the adenine ring of phosphoribosyl-AMP. The chain is Phosphoribosyl-AMP cyclohydrolase from Listeria monocytogenes serovar 1/2a (strain ATCC BAA-679 / EGD-e).